The following is a 934-amino-acid chain: Replication factor C subunit 1 (934 aa).

Positions 1–190 are disordered; that stretch reads MSNSDIRSFF…RSSKSKGLPR (190 aa). Phosphoserine is present on Ser-27. The span at 29-39 shows a compositional bias: basic residues; that stretch reads KPKRSLKKKRI. The span at 89 to 104 shows a compositional bias: polar residues; that stretch reads GVSTTPDEYFEQQSTR. Basic and acidic residues predominate over residues 118–128; the sequence is TTSKDVVHPVK. Low complexity predominate over residues 165-186; it reads TSKSKSHTTTATTHTSRSSKSK. The BRCT domain maps to 236–326; it reads GNSDCLSGIS…PASGGTGAAA (91 aa). Residues Thr-362, Cys-374, 416–423, and Asn-519 contribute to the ATP site; that span reads GPPGIGKT. Over residues 876–895 the composition is skewed to acidic residues; that stretch reads AEDEMLEEASDSEAANEEDI. Positions 876-934 are disordered; the sequence is AEDEMLEEASDSEAANEEDIDLSKDKFISVPKKPKKRTKAKAEASSSSSTSRRSRKKTA.

This sequence belongs to the activator 1 large subunit family. Heteropentamer of subunits rfc1, rfc2, rfc3, rfc4 and rfc5 that forms a complex (RFC) with PCNA in the presence of ATP. Interacts with cdc24.

The protein resides in the nucleus. It is found in the nucleolus. Its function is as follows. The elongation of primed DNA templates by DNA polymerase delta and epsilon requires the action of the accessory proteins PCNA and activator 1. Subunit 1 is essential for cell cycle progression. It may associate with components of the DNA replication machinery and serve to enhance the efficiency of DNA replication. This Schizosaccharomyces pombe (strain 972 / ATCC 24843) (Fission yeast) protein is Replication factor C subunit 1 (rfc1).